The following is a 308-amino-acid chain: Aspartate carbamoyltransferase catalytic subunit (308 aa).

Carbamoyl phosphate is bound by residues Arg-59 and Thr-60. Lys-87 contributes to the L-aspartate binding site. Arg-109, His-137, and Gln-140 together coordinate carbamoyl phosphate. L-aspartate contacts are provided by Arg-170 and Arg-224. Positions 265 and 266 each coordinate carbamoyl phosphate.

This sequence belongs to the aspartate/ornithine carbamoyltransferase superfamily. ATCase family. In terms of assembly, heterododecamer (2C3:3R2) of six catalytic PyrB chains organized as two trimers (C3), and six regulatory PyrI chains organized as three dimers (R2).

The enzyme catalyses carbamoyl phosphate + L-aspartate = N-carbamoyl-L-aspartate + phosphate + H(+). The protein operates within pyrimidine metabolism; UMP biosynthesis via de novo pathway; (S)-dihydroorotate from bicarbonate: step 2/3. In terms of biological role, catalyzes the condensation of carbamoyl phosphate and aspartate to form carbamoyl aspartate and inorganic phosphate, the committed step in the de novo pyrimidine nucleotide biosynthesis pathway. This chain is Aspartate carbamoyltransferase catalytic subunit, found in Flavobacterium psychrophilum (strain ATCC 49511 / DSM 21280 / CIP 103535 / JIP02/86).